The following is a 492-amino-acid chain: MDPYKYRPASSYNSPFFTTNSGAPVWNNNSSMTVGPRGPILLEDYHLVEKLANFDRERIPERVVHARGASAKGFFEVTHDISNLTCADFLRAPGVQTPVIVRFSTVIHERGSPETLRDPRGFAVKFYTREGNFDLVGNNFPVFFIRDGMKFPDMVHALKPNPKSHIQENWRILDFFSHHPESLNMFTFLFDDIGIPQDYRHMDGSGVNTYMLINKAGKAHYVKFHWKPTCGVKSLLEEDAIRVGGTNHSHATQDLYDSIAAGNYPEWKLFIQIIDPADEDKFDFDPLDVTKTWPEDILPLQPVGRMVLNKNIDNFFAENEQLAFCPAIIVPGIHYSDDKLLQTRVFSYADTQRHRLGPNYLQLPVNAPKCAHHNNHHEGFMNFMHRDEEVNYFPSRYDQVRHAEKYPTPPAVCSGKRERCIIEKENNFKEPGERYRTFTPERQERFIQRWIDALSDPRITHEIRSIWISYWSQADKSLGQKLASRLNVRPSI.

Active-site residues include histidine 65 and asparagine 138. A heme-binding site is contributed by tyrosine 348.

Belongs to the catalase family. As to quaternary structure, homotetramer and heterotetramer. At least six or seven isozymes are produced from a mixture of 3 gene products. Interacts with NCA1. Interacts with LSD1. The cofactor is heme.

It localises to the cytoplasm. It is found in the cytosol. The protein resides in the peroxisome matrix. The enzyme catalyses 2 H2O2 = O2 + 2 H2O. Functionally, catalyzes the degradation of hydrogen peroxide (H(2)O(2)) generated by peroxisomal oxidases to water and oxygen, thereby protecting cells from the toxic effects of hydrogen peroxide. This chain is Catalase-2 (CAT2), found in Arabidopsis thaliana (Mouse-ear cress).